The following is a 201-amino-acid chain: Peptidyl-prolyl cis-trans isomerase CYP19-4 (201 aa).

An N-terminal signal peptide occupies residues 1–23 (MAKASFILLGTLFLFGAIASIQA). Residues 35–198 (YFDVEIDGKS…SKVVIADSGE (164 aa)) enclose the PPIase cyclophilin-type domain.

This sequence belongs to the cyclophilin-type PPIase family. As to quaternary structure, interacts with EMB30/GNOM. Ubiquitous, mostly in aerial organs (at protein level).

Its subcellular location is the cytoplasm. It localises to the membrane. It is found in the endoplasmic reticulum. The protein resides in the secreted. It catalyses the reaction [protein]-peptidylproline (omega=180) = [protein]-peptidylproline (omega=0). Its activity is regulated as follows. Binds cyclosporin A (CsA). CsA mediates some of its effects via an inhibitory action on PPIase. PPIases accelerate the folding of proteins. It catalyzes the cis-trans isomerization of proline imidic peptide bonds in oligopeptides. May be involved during embryogenesis and organ development by regulating the folding of EMB30/GNOM, and thus, by modulating its activity. This Arabidopsis thaliana (Mouse-ear cress) protein is Peptidyl-prolyl cis-trans isomerase CYP19-4 (CYP19-4).